We begin with the raw amino-acid sequence, 129 residues long: uncharacterized protein (129 aa).

Disordered stretches follow at residues 1-57 (MGGG…LPNH) and 87-129 (PVSS…WLWW). The segment covering 10–20 (SGEERREKRSG) has biased composition (basic and acidic residues). A compositionally biased stretch (low complexity) spans 87–99 (PVSSSPSRSPSSS).

This is an uncharacterized protein from Homo sapiens (Human).